The chain runs to 780 residues: Lon protease (780 aa).

The 194-residue stretch at 11–204 folds into the Lon N-terminal domain; sequence IPVLPLRDVV…RLMAIMESEI (194 aa). 356-363 provides a ligand contact to ATP; it reads GPPGVGKT. One can recognise a Lon proteolytic domain in the interval 592–773; the sequence is KNQIGQVIGL…KEVLNLSLEN (182 aa). Active-site residues include Ser-679 and Lys-722.

Belongs to the peptidase S16 family. Homohexamer. Organized in a ring with a central cavity.

It localises to the cytoplasm. It catalyses the reaction Hydrolysis of proteins in presence of ATP.. ATP-dependent serine protease that mediates the selective degradation of mutant and abnormal proteins as well as certain short-lived regulatory proteins. Required for cellular homeostasis and for survival from DNA damage and developmental changes induced by stress. Degrades polypeptides processively to yield small peptide fragments that are 5 to 10 amino acids long. Binds to DNA in a double-stranded, site-specific manner. The chain is Lon protease from Buchnera aphidicola subsp. Baizongia pistaciae (strain Bp).